A 565-amino-acid polypeptide reads, in one-letter code: NAD-dependent malic enzyme (565 aa).

The active-site Proton donor is Y104. R157 serves as a coordination point for NAD(+). K175 serves as the catalytic Proton acceptor. The a divalent metal cation site is built by E246, D247, and D270. The NAD(+) site is built by D270 and N418.

Belongs to the malic enzymes family. As to quaternary structure, homotetramer. Requires Mg(2+) as cofactor. Mn(2+) is required as a cofactor.

It carries out the reaction (S)-malate + NAD(+) = pyruvate + CO2 + NADH. The catalysed reaction is oxaloacetate + H(+) = pyruvate + CO2. The protein is NAD-dependent malic enzyme of Salmonella newport (strain SL254).